A 516-amino-acid polypeptide reads, in one-letter code: Histidine ammonia-lyase (516 aa).

Residues Ala-143–Gly-145 constitute a cross-link (5-imidazolinone (Ala-Gly)). Position 144 is a 2,3-didehydroalanine (Ser) (Ser-144).

This sequence belongs to the PAL/histidase family. Post-translationally, contains an active site 4-methylidene-imidazol-5-one (MIO), which is formed autocatalytically by cyclization and dehydration of residues Ala-Ser-Gly.

The protein localises to the cytoplasm. It carries out the reaction L-histidine = trans-urocanate + NH4(+). It participates in amino-acid degradation; L-histidine degradation into L-glutamate; N-formimidoyl-L-glutamate from L-histidine: step 1/3. The polypeptide is Histidine ammonia-lyase (Koribacter versatilis (strain Ellin345)).